Consider the following 428-residue polypeptide: MSSVKVYKALAFSLRTSEIASDKSISHRCAMFAMLADGTSQITNFLRAEDTMNSLKIVKNLGATIDDDGETIKISSDGIKESSEVLDCGNSGTGMRLFCGLLSSADGHFVLSGDEYLRRRPMKRITAPLRDIGAKLDGRENGDLAPLSIRGASLKAFNYESKIASAQVKSAMILAALRADGECSFSEPELSRDHTERMLKGMGAEIEVEGLITKIKPMKKLLSPLKIRVPADPSSAFFFAVAAAITPNSNVVLEGVTLNPTRIEAFKALERMGADIRYEATENIYEPIGNIHVKYAPLKAITVEDNISWLIDELPALSIAFACADGVSIVKNAQELRVKESDRISTVVNGLKACGIEVDEVHDGYSVKGGVLKEAKIDSHGDHRIAMSFIIAGVTCGMRVDDIACINTSFPNFFELLKKITKVEFTSL.

3-phosphoshikimate-binding residues include Lys-23, Ser-24, and Arg-28. Residue Lys-23 coordinates phosphoenolpyruvate. Positions 92 and 120 each coordinate phosphoenolpyruvate. 3-phosphoshikimate is bound by residues Ser-165, Gln-167, Asp-312, and Lys-339. Phosphoenolpyruvate is bound at residue Gln-167. Asp-312 functions as the Proton acceptor in the catalytic mechanism. Phosphoenolpyruvate contacts are provided by Arg-343 and Arg-384.

The protein belongs to the EPSP synthase family. Monomer.

It localises to the cytoplasm. The enzyme catalyses 3-phosphoshikimate + phosphoenolpyruvate = 5-O-(1-carboxyvinyl)-3-phosphoshikimate + phosphate. The protein operates within metabolic intermediate biosynthesis; chorismate biosynthesis; chorismate from D-erythrose 4-phosphate and phosphoenolpyruvate: step 6/7. Its function is as follows. Catalyzes the transfer of the enolpyruvyl moiety of phosphoenolpyruvate (PEP) to the 5-hydroxyl of shikimate-3-phosphate (S3P) to produce enolpyruvyl shikimate-3-phosphate and inorganic phosphate. This chain is 3-phosphoshikimate 1-carboxyvinyltransferase, found in Sulfurimonas denitrificans (strain ATCC 33889 / DSM 1251) (Thiomicrospira denitrificans (strain ATCC 33889 / DSM 1251)).